The primary structure comprises 181 residues: Translation initiation factor IF-3, chloroplastic (181 aa).

It belongs to the IF-3 family. In terms of assembly, monomer.

It localises to the plastid. It is found in the chloroplast. In terms of biological role, IF-3 binds to the 30S ribosomal subunit and shifts the equilibrium between 70S ribosomes and their 50S and 30S subunits in favor of the free subunits, thus enhancing the availability of 30S subunits on which protein synthesis initiation begins. The protein is Translation initiation factor IF-3, chloroplastic of Galdieria sulphuraria (Red alga).